A 936-amino-acid chain; its full sequence is MutS protein homolog 4 (936 aa).

2 disordered regions span residues 1-83 (MLRP…AQGS) and 103-133 (GASSSSARDTNYPQTLKTPLSTGNPQRSGYK). Over residues 7–20 (SSTSPSAPAVSPSS) the composition is skewed to low complexity. Residues 35–55 (LQETPQSRPSVQVVSASTCPG) show a composition bias toward polar residues. Position 680–687 (680–687 (GPNMSGKS)) interacts with ATP.

Belongs to the DNA mismatch repair MutS family. As to quaternary structure, heterooligomer of MSH4 and MSH5. As to expression, highly expressed in testis. Also expressed in the ovary.

Its subcellular location is the chromosome. Involved in meiotic recombination. Required for reciprocal recombination and proper segregation of homologous chromosomes at meiosis. This Homo sapiens (Human) protein is MutS protein homolog 4 (MSH4).